Reading from the N-terminus, the 494-residue chain is MAARTDNSIVVNAPFELVWDVTNDIEAWPELFSEYAEAEILRQDGDGFDFRLKTRPDANGRVWEWVSHRVPDKGSRTVRAHRVETGPFAYMNLHWTYRAVAGGTEMRWVQEFDMKPGAPFDNAHMTAHLNTTTRANMERIKKIIEDRHREGQRTPASVLPTELHAQQLLLLAASGRLARIVHVLTELRIADLLADGPRHVAELAKETDTHELSLYRVLRSAASVGVFAEGPVRTFSATPLSDGLRTGNPDGVLPLVKYNNMELTRRPYDEIMHSVRTGEPAFRRVFGSSFFEHLEANPEAGEFFERFMAHWSRRLVLDGLADQGMERFSRIADLGGGDGWFLAQILRRHPHATGLLMDLPRVAASAGPVLEEAKVADRVTVLPGDFFTDPVPTGYDAYLFKGVLHNWSDERAVTVLRRVREAIGDDDARLLIFDQVMAPENEWDHAKLLDIDMLVLFGGRERVLAEWRQLLLEADFDIVNTPSHTWTTLECRPV.

The segment at 11 to 140 is polyketide cyclase; it reads VNAPFELVWD…TTTRANMERI (130 aa). S67 (proton acceptor; for cyclase activity) is an active-site residue. Catalysis depends on proton donor; for cyclase activity residues R69 and R82. The interval 169 to 494 is methyltransferase; sequence LLLAASGRLA…TWTTLECRPV (326 aa). Residues D358 and 384–386 each bind S-adenosyl-L-methionine; that span reads GDF. The active-site Proton acceptor; for methyltransferase activity is H405.

In the C-terminal section; belongs to the class I-like SAM-binding methyltransferase superfamily. Cation-independent O-methyltransferase family. As to quaternary structure, the tetracenomycin polyketide synthase (TCM PKS) is composed of a ketosynthase complex (TcmKL), an acyl carrier protein (TcmM), a cyclase (TcmN) and a probable second cyclase (TcmJ). TcmN is a homodimer in solution.

The enzyme catalyses 10 malonyl-CoA + 8 H(+) = tetracenomycin F2 + 10 CO2 + 10 CoA + 2 H2O. It participates in antibiotic biosynthesis; tetracenomycin C biosynthesis. Its function is as follows. Involved in the biosynthesis of tetracenomycin C (TCM C). Part of a type II polyketide synthase (PKS) that catalyzes the synthesis of tetracenomycin F2 (TCM F2), a precursor of TCM C, from malonyl-CoA. The TcmN N-terminal domain, when coupled with the other components of the PKS, catalyzes the cyclization and aromatization of the linear polyketide intermediate. Catalyzes the cyclization of the first and second rings. In addition, the C-terminal domain acts as a methyltransferase. It catalyzes the specific O-methylation of tetracenomycin D3 (TCM D3) to TCM B3, using S-adenosyl-L-methionine as the methyl donor. The chain is Tetracenomycin biosynthesis bifunctional cyclase/O-methyl transferase TcmN from Streptomyces glaucescens.